A 999-amino-acid chain; its full sequence is Testis anion transporter 1 (999 aa).

Over 1 to 93 (MQTERSLQSF…YRFKDWLLGD (93 aa)) the chain is Cytoplasmic. The chain crosses the membrane as a helical span at residues 94–114 (LLAGLSVGLVQVPQGLILSLL). At 115-117 (TRQ) the chain is on the extracellular side. A helical transmembrane segment spans residues 118-138 (LIPPLNVTYAAFCSSVIYVIF). A topological domain (cytoplasmic) is located at residue glycine 139. The chain crosses the membrane as a helical span at residues 140–160 (SCHQMSIGPFFLVSALMINVL). The Extracellular portion of the chain corresponds to 161 to 200 (KDRPFNNGHLILGTFVKDDFSVPTFYLSYNRSLSMVASTT). Asparagine 190 is a glycosylation site (N-linked (GlcNAc...) asparagine). Residues 201-221 (FLTGIIQLSMGMLGMGFMATY) form a helical membrane-spanning segment. The Cytoplasmic portion of the chain corresponds to 222 to 230 (LPEAATSAY). Residues 231 to 251 (LAAVALHIILAQMTCILGIMV) form a helical membrane-spanning segment. Over 252 to 268 (SFHAGPISFIYNIINYC) the chain is Extracellular. A helical membrane pass occupies residues 269–289 (IALPKANSTSILLFITSVVAL). Residues 290-305 (RINKCIRITFNRYPIE) lie on the Cytoplasmic side of the membrane. A helical transmembrane segment spans residues 306-326 (FPMELLLILGFSLLTSKITMA). Topologically, residues 327–354 (TENSKMLMNMIPYSFVFPENPEFGILSR) are extracellular. Residues 355–375 (VVLQALSLSFVSSFLLISLGK) form a helical membrane-spanning segment. Residues 376-390 (KIANFHNYRTNSNQD) are Cytoplasmic-facing. The chain crosses the membrane as a helical span at residues 391 to 411 (LIAIGLCNLLSSFFKCCVFTG). Topologically, residues 412–427 (SLSRTTIQDKSGGRQQ) are extracellular. A helical membrane pass occupies residues 428-448 (FASLVGAGVMLLLMVKMESFF). Over 449–453 (HNLPN) the chain is Cytoplasmic. The chain crosses the membrane as a helical span at residues 454 to 474 (AVLAGIILSNVVPYLEAIYNL). Over 475–494 (PSLWRQDQYECIIWMVTFSS) the chain is Extracellular. A helical membrane pass occupies residues 495-515 (AILLGLDVGLLISLAFTFFVI). The Cytoplasmic portion of the chain corresponds to 516-544 (TIRSHRTKILVLGQIPNTNIYRNVNDYRE). Positions 541–796 (DYREVILIPG…LSLHDAVLFA (256 aa)) constitute an STAS domain. A helical membrane pass occupies residues 545–565 (VILIPGVKIFQCCSSITFVNV). Residues 566-999 (YHLKQKVLKE…RKPHNYPNSP (434 aa)) lie on the Extracellular side of the membrane. The segment at 661 to 999 (TVSSTSQRNI…RKPHNYPNSP (339 aa)) is interaction with RACGAP1. 2 disordered regions span residues 678-701 (EKAW…SESL) and 893-999 (SELD…PNSP). Pro residues predominate over residues 684-696 (NSPPRNSPLPPPE). Composition is skewed to acidic residues over residues 893–903 (SELDPGSELDS) and 912–947 (ELES…EPEP). Residues 973-982 (GSSNSQSRAP) show a composition bias toward polar residues.

Belongs to the SLC26A/SulP transporter (TC 2.A.53) family. As to quaternary structure, interacts with RACGAP1. Interacts with CFTR; stimulates anion transport activity of CFTR. N-glycosylated. Expressed in testis and epididymis. Located at the end of the midpiece of the flagella, known as the annulus, in spermatozoa.

It localises to the membrane. The catalysed reaction is sulfate(out) + chloride(in) = sulfate(in) + chloride(out). The enzyme catalyses oxalate(in) + chloride(out) = oxalate(out) + chloride(in). Antiporter that mediates the exchange of sulfate and oxalate against chloride ions across a membrane. Stimulates anion transport activity of CFTR. May cooperate with CFTR in the regulation of chloride and bicarbonate ions fluxes required for activation of the ADCY10/PKA pathway during sperm motility and sperm capacitation. May play a role in sperm tail differentiation and motility and hence male fertility. The sequence is that of Testis anion transporter 1 from Mus musculus (Mouse).